Reading from the N-terminus, the 515-residue chain is Lysosomal acid glucosylceramidase (515 aa).

The first 19 residues, 1–19 (MAARLIGFFLFQAVSWAYG), serve as a signal peptide directing secretion. 2 disulfide bridges follow: cysteine 23-cysteine 35 and cysteine 37-cysteine 42. N-linked (GlcNAc...) asparagine glycosylation is found at asparagine 38 and asparagine 78. The N-linked (GlcNAc...) (high mannose) asparagine glycan is linked to asparagine 165. Glutamate 254 (proton donor) is an active-site residue. N-linked (GlcNAc...) asparagine glycosylation is present at asparagine 289. Glutamate 358 functions as the Nucleophile in the catalytic mechanism. Asparagine 480 is a glycosylation site (N-linked (GlcNAc...) asparagine).

This sequence belongs to the glycosyl hydrolase 30 family. As to quaternary structure, interacts with saposin-C. Interacts with SCARB2. Interacts with TCP1. Interacts with GRN; this interaction prevents aggregation of GBA1-SCARB2 complex via interaction with HSPA1A upon stress.

It is found in the lysosome membrane. The catalysed reaction is a beta-D-glucosyl-(1&lt;-&gt;1')-N-acylsphing-4-enine + H2O = an N-acylsphing-4-enine + D-glucose. It catalyses the reaction a beta-D-galactosyl-(1&lt;-&gt;1')-N-acylsphing-4-enine + H2O = an N-acylsphing-4-enine + D-galactose. The enzyme catalyses cholesteryl 3-beta-D-glucoside + H2O = cholesterol + D-glucose. It carries out the reaction a beta-D-glucosyl-(1&lt;-&gt;1')-N-acylsphing-4-enine + cholesterol = cholesteryl 3-beta-D-glucoside + an N-acylsphing-4-enine. The catalysed reaction is beta-D-glucosyl-(1&lt;-&gt;1')-N-hexadecanoylsphing-4-enine + cholesterol = cholesteryl 3-beta-D-glucoside + N-hexadecanoylsphing-4-enine. It catalyses the reaction beta-D-glucosyl-N-(9Z-octadecenoyl)-sphing-4E-enine + cholesterol = N-(9Z-octadecenoyl)-sphing-4-enine + cholesteryl 3-beta-D-glucoside. The enzyme catalyses beta-D-glucosyl-N-octanoylsphing-4E-enine + cholesterol = N-octanoylsphing-4-enine + cholesteryl 3-beta-D-glucoside. It carries out the reaction beta-D-glucosyl-N-dodecanoylsphing-4-enine + cholesterol = N-dodecanoylsphing-4-enine + cholesteryl 3-beta-D-glucoside. The catalysed reaction is beta-D-glucosyl-(1&lt;-&gt;1)-N-octadecanoylsphing-4-enine + cholesterol = N-octadecanoylsphing-4-enine + cholesteryl 3-beta-D-glucoside. It catalyses the reaction beta-D-glucosyl-(1&lt;-&gt;1')-N-(15Z-tetracosenoyl)-sphing-4-enine + cholesterol = N-(15Z-tetracosenoyl)-sphing-4-enine + cholesteryl 3-beta-D-glucoside. The enzyme catalyses a beta-D-galactosyl-(1&lt;-&gt;1')-N-acylsphing-4-enine + cholesterol = cholesteryl 3-beta-D-galactoside + an N-acylsphing-4-enine. It carries out the reaction 1-(beta-D-galactosyl)-N-dodecanoylsphing-4-enine + cholesterol = cholesteryl 3-beta-D-galactoside + N-dodecanoylsphing-4-enine. The catalysed reaction is a beta-D-xylosyl-(1&lt;-&gt;1')-N-acylsphing-4-enine + cholesterol = cholesteryl 3-beta-D-xyloside + an N-acylsphing-4-enine. It catalyses the reaction beta-D-xylosyl-(1&lt;-&gt;1')-N-(9Z-octadecenoyl)-sphing-4-enine + cholesterol = cholesteryl 3-beta-D-xyloside + N-(9Z-octadecenoyl)-sphing-4-enine. Its pathway is steroid metabolism; cholesterol metabolism. It participates in sphingolipid metabolism. Its activity is regulated as follows. Inhibited by conduritol B epoxide/CBE. In terms of biological role, glucosylceramidase that catalyzes, within the lysosomal compartment, the hydrolysis of glucosylceramides/GlcCers (such as beta-D-glucosyl-(1&lt;-&gt;1')-N-acylsphing-4-enine) into free ceramides (such as N-acylsphing-4-enine) and glucose. Plays a central role in the degradation of complex lipids and the turnover of cellular membranes. Through the production of ceramides, participates in the PKC-activated salvage pathway of ceramide formation. Catalyzes the glucosylation of cholesterol, through a transglucosylation reaction where glucose is transferred from GlcCer to cholesterol. GlcCer containing mono-unsaturated fatty acids (such as beta-D-glucosyl-N-(9Z-octadecenoyl)-sphing-4-enine) are preferred as glucose donors for cholesterol glucosylation when compared with GlcCer containing same chain length of saturated fatty acids (such as beta-D-glucosyl-N-octadecanoyl-sphing-4-enine). Under specific conditions, may alternatively catalyze the reverse reaction, transferring glucose from cholesteryl 3-beta-D-glucoside to ceramide. Can also hydrolyze cholesteryl 3-beta-D-glucoside producing glucose and cholesterol. Catalyzes the hydrolysis of galactosylceramides/GalCers (such as beta-D-galactosyl-(1&lt;-&gt;1')-N-acylsphing-4-enine), as well as the transfer of galactose between GalCers and cholesterol in vitro, but with lower activity than with GlcCers. Contrary to GlcCer and GalCer, xylosylceramide/XylCer (such as beta-D-xyosyl-(1&lt;-&gt;1')-N-acylsphing-4-enine) is not a good substrate for hydrolysis, however it is a good xylose donor for transxylosylation activity to form cholesteryl 3-beta-D-xyloside. The polypeptide is Lysosomal acid glucosylceramidase (Gba1) (Mus musculus (Mouse)).